Here is a 139-residue protein sequence, read N- to C-terminus: ATP synthase epsilon chain (139 aa).

The protein belongs to the ATPase epsilon chain family. F-type ATPases have 2 components, CF(1) - the catalytic core - and CF(0) - the membrane proton channel. CF(1) has five subunits: alpha(3), beta(3), gamma(1), delta(1), epsilon(1). CF(0) has three main subunits: a, b and c.

The protein localises to the cell inner membrane. Functionally, produces ATP from ADP in the presence of a proton gradient across the membrane. The sequence is that of ATP synthase epsilon chain from Alcanivorax borkumensis (strain ATCC 700651 / DSM 11573 / NCIMB 13689 / SK2).